A 379-amino-acid chain; its full sequence is Tryptophan--tRNA ligase, mitochondrial (379 aa).

ATP is bound by residues Q42 and 48 to 51 (HLGN). The 'HIGH' region signature appears at 43 to 51 (PTGCFHLGN). L-tryptophan is bound at residue D184. ATP is bound by residues 196–198 (GDD), V235, 244–248 (KMSKS), and K247. The short motif at 244–248 (KMSKS) is the 'KMSKS' region element.

This sequence belongs to the class-I aminoacyl-tRNA synthetase family. Homodimer.

The protein resides in the mitochondrion matrix. The catalysed reaction is tRNA(Trp) + L-tryptophan + ATP = L-tryptophyl-tRNA(Trp) + AMP + diphosphate + H(+). Mitochondrial aminoacyl-tRNA synthetase that catalyzes the attachment of tryptophan to tRNA(Trp). The chain is Tryptophan--tRNA ligase, mitochondrial (MSW1) from Saccharomyces cerevisiae (strain ATCC 204508 / S288c) (Baker's yeast).